A 35-amino-acid chain; its full sequence is MESVAYILIFTLCIGTIFFAIAFREPPRFEKPKDK.

The chain crosses the membrane as a helical span at residues 3 to 23 (SVAYILIFTLCIGTIFFAIAF).

Belongs to the PsbT family. In terms of assembly, PSII is composed of 1 copy each of membrane proteins PsbA, PsbB, PsbC, PsbD, PsbE, PsbF, PsbH, PsbI, PsbJ, PsbK, PsbL, PsbM, PsbT, PsbX, PsbY, PsbZ, Psb30/Ycf12, peripheral proteins PsbO, CyanoQ (PsbQ), PsbU, PsbV and a large number of cofactors. It forms dimeric complexes.

It localises to the cellular thylakoid membrane. Functionally, found at the monomer-monomer interface of the photosystem II (PS II) dimer, plays a role in assembly and dimerization of PSII. PSII is a light-driven water plastoquinone oxidoreductase, using light energy to abstract electrons from H(2)O, generating a proton gradient subsequently used for ATP formation. The chain is Photosystem II reaction center protein T from Nostoc punctiforme (strain ATCC 29133 / PCC 73102).